A 519-amino-acid chain; its full sequence is UPF0053 protein bbp_300 (519 aa).

7 consecutive transmembrane segments (helical) span residues 13 to 35, 48 to 70, 80 to 102, 123 to 145, 150 to 172, 185 to 207, and 212 to 231; these read LLTL…AILS, LIGL…WMVT, YFSF…FKAT, AGFW…DAII, TINN…LIAS, VVVL…ALGF, and GYLY…NQIA. CBS domains follow at residues 311–373 and 374–434; these read MTPR…IIDF and SSTT…DADE.

The protein belongs to the UPF0053 family.

The protein localises to the cell membrane. This Buchnera aphidicola subsp. Baizongia pistaciae (strain Bp) protein is UPF0053 protein bbp_300.